We begin with the raw amino-acid sequence, 228 residues long: 3,4-dihydroxy-2-butanone 4-phosphate synthase (228 aa).

D-ribulose 5-phosphate contacts are provided by residues 37–38 (RE), D42, 150–154 (RRGHT), and E174. A Mg(2+)-binding site is contributed by E38. Residue H153 participates in Mg(2+) binding.

This sequence belongs to the DHBP synthase family. Homodimer. Mg(2+) serves as cofactor. It depends on Mn(2+) as a cofactor.

The enzyme catalyses D-ribulose 5-phosphate = (2S)-2-hydroxy-3-oxobutyl phosphate + formate + H(+). It participates in cofactor biosynthesis; riboflavin biosynthesis; 2-hydroxy-3-oxobutyl phosphate from D-ribulose 5-phosphate: step 1/1. In terms of biological role, catalyzes the conversion of D-ribulose 5-phosphate to formate and 3,4-dihydroxy-2-butanone 4-phosphate. This chain is 3,4-dihydroxy-2-butanone 4-phosphate synthase, found in Photobacterium profundum (strain SS9).